Reading from the N-terminus, the 163-residue chain is Nucleotide-binding protein Bcer98_0876 (163 aa).

The protein belongs to the YajQ family.

In terms of biological role, nucleotide-binding protein. The chain is Nucleotide-binding protein Bcer98_0876 from Bacillus cytotoxicus (strain DSM 22905 / CIP 110041 / 391-98 / NVH 391-98).